The chain runs to 227 residues: Cytosolic-abundant heat soluble protein 106094 (227 aa).

The disordered stretch occupies residues 1-28 (MEAMNMNIPRDAMFVPPPESEQNGYHEK). Positions 90–140 (VEEARRDYAAKTRENEMLGQQYEKELERKSEAYRKHQEVEADKIRKELEKQ) form a coiled coil. CAHS motif regions lie at residues 122–140 (YRKH…LEKQ) and 159–177 (QKRM…MDRE). The segment at 198–227 (LDSSAAGTESGGHVVSQSEKFTERNREMKR) is disordered. Residues 217–227 (KFTERNREMKR) are compositionally biased toward basic and acidic residues.

This sequence belongs to the Cytosolic-abundant heat soluble protein (CAHS) family.

The protein resides in the cytoplasm. In terms of biological role, CAHS proteins are cytosolic heat soluble proteins that seem to contribute to the anhydrobiosis in tardigrades, but their specific mechanisms are yet to be identified. It is possible that protection during anhydrobiosis might occur via the stabilization of vitrifying small molecules such as sugars, but not via the direct glass transition of CAHS proteins themselves. The polypeptide is Cytosolic-abundant heat soluble protein 106094 (Paramacrobiotus richtersi (Water bear)).